The following is a 492-amino-acid chain: Probable Xaa-Pro aminopeptidase ACLA_020440 (492 aa).

Positions 272, 283, 421, and 460 each coordinate Mn(2+).

It belongs to the peptidase M24B family. The cofactor is Mn(2+).

It catalyses the reaction Release of any N-terminal amino acid, including proline, that is linked to proline, even from a dipeptide or tripeptide.. Its function is as follows. Catalyzes the removal of a penultimate prolyl residue from the N-termini of peptides. This is Probable Xaa-Pro aminopeptidase ACLA_020440 from Aspergillus clavatus (strain ATCC 1007 / CBS 513.65 / DSM 816 / NCTC 3887 / NRRL 1 / QM 1276 / 107).